We begin with the raw amino-acid sequence, 119 residues long: Large ribosomal subunit protein bL20 (119 aa).

Belongs to the bacterial ribosomal protein bL20 family.

Its function is as follows. Binds directly to 23S ribosomal RNA and is necessary for the in vitro assembly process of the 50S ribosomal subunit. It is not involved in the protein synthesizing functions of that subunit. This chain is Large ribosomal subunit protein bL20, found in Syntrophus aciditrophicus (strain SB).